A 175-amino-acid chain; its full sequence is MAIDFKEHIASVQDFPNKGIVFRDITPILQDGKLYRAATHELADYAKSRGAEVIVGPEARGFIVGCPVATELGVGFVPARKPHKLPREVESASYDLEYGSNVLEMHKDAIKPGQKVVICDDLMATAGTLHATKELIENLGGEVVGAAFYIELTDLKGREQFPDLDIYSLVKYSDA.

Belongs to the purine/pyrimidine phosphoribosyltransferase family. In terms of assembly, homodimer.

It is found in the cytoplasm. It catalyses the reaction AMP + diphosphate = 5-phospho-alpha-D-ribose 1-diphosphate + adenine. It participates in purine metabolism; AMP biosynthesis via salvage pathway; AMP from adenine: step 1/1. In terms of biological role, catalyzes a salvage reaction resulting in the formation of AMP, that is energically less costly than de novo synthesis. This Lactobacillus johnsonii (strain CNCM I-12250 / La1 / NCC 533) protein is Adenine phosphoribosyltransferase.